Here is a 901-residue protein sequence, read N- to C-terminus: MTTQLNINLVIENAKRVITPLSPISIFAARNPWEGLEADTFEDVAKWLRDVRDVDIFPNKALIESAVARGELDESVFNQLVTDMLLEHHYNIPQHYINLYIDNIKTLKDVPASYMNHSNVDVVADLLLEKSKRDMAESYHHYDVRPMSDAIIDEQGEPLSEQVNRQMIKWTKLYIDQFLSSWTMPKREQSFYHAWLHLAQHDHSFTKAQRQVIKDLPNDPKMTIESVLNHFSIAQEDYQAYVEGHLLALPGWAGMLYYRSQQHHFEQHLLTDYLAIRLVVEQLLVGDEFKSVTKDCESRSENWFKQTVASWCYYSDMPSDVLLQHDVNEIQTFIHFAATMNKNVFKNLWLIAWEMTYESQVKQKIKAGHESLAGALDVNQVNVTENDNANQSHSVSLNDTQAVDENNSELNQVDTSTKAQIAFCIDVRSEPFRRHIEAAGPFETIGIAGFFGLPIQKDAVDEQFKHDSLPVMVPPAYRIKEFADRYDMNVYRQQQQTMSSMFYTFKLMKNNVMPSLLLPELSGPFLSLSTIVNTIMPRKSRASLQKIKQKWLKKPETKLTIDREFDRTSDLPVGFTEQEQIDFALQALKLMDLTEAFAPFVVLAGHASHSHNNPHHASLECGACGGASSGFNAKLLAMICNRPNVRQGLKQAGVYIPETTVFAAAEHHTSTDTLAWVYVPDTLSALALDAYESLNDVMPMISEHANRERLDKLPTIGRVNHPVEEAQRFASDWSEVRPEWGLAKNASFIIGRRQLTKGIDLEGRTFLHNYDWRKDKDGTLLNTIISGPVLVAQWINLQYYASTVAPHFYGSGNKATQTVTSGVGVMQGNASDLMYGLSWQSVMAADRTMYHSPIRLLVVIQAPDYVVARLLANNEHFARKASNHWLRLMSVNEEGRFKSWI.

Residues Cys424, Asp426, His606, and Cys621 each coordinate Zn(2+).

The protein belongs to the inorganic carbon transporter (TC 9.A.2) DabA family. In terms of assembly, forms a complex with DabB. Requires Zn(2+) as cofactor.

Its subcellular location is the cell membrane. Its function is as follows. Part of an energy-coupled inorganic carbon pump. In Staphylococcus aureus (strain bovine RF122 / ET3-1), this protein is Probable inorganic carbon transporter subunit DabA.